A 262-amino-acid chain; its full sequence is Indole-3-glycerol phosphate synthase (262 aa).

Belongs to the TrpC family.

The enzyme catalyses 1-(2-carboxyphenylamino)-1-deoxy-D-ribulose 5-phosphate + H(+) = (1S,2R)-1-C-(indol-3-yl)glycerol 3-phosphate + CO2 + H2O. The protein operates within amino-acid biosynthesis; L-tryptophan biosynthesis; L-tryptophan from chorismate: step 4/5. The protein is Indole-3-glycerol phosphate synthase of Bordetella pertussis (strain Tohama I / ATCC BAA-589 / NCTC 13251).